We begin with the raw amino-acid sequence, 333 residues long: Nucleoid-associated protein PSPTO_1265 (333 aa).

The protein belongs to the YejK family.

The protein localises to the cytoplasm. It is found in the nucleoid. This is Nucleoid-associated protein PSPTO_1265 from Pseudomonas syringae pv. tomato (strain ATCC BAA-871 / DC3000).